We begin with the raw amino-acid sequence, 1894 residues long: Fibronectin type III domain-containing protein 1 (1894 aa).

Positions 1–32 (MAPEAGATLRAPRRLSWAALLLLAALLPVASS) are cleaved as a signal peptide. Residues 39–131 (HPLKPRHVKL…PVYRAESPPG (93 aa)) form the Fibronectin type-III 1 domain. The N-linked (GlcNAc...) asparagine glycan is linked to N149. Fibronectin type-III domains lie at 158-258 (PNKP…SEED), 262-357 (VPDD…TPES), and 362-457 (APEN…MPTT). Disordered regions lie at residues 455–500 (PTTS…PQGR), 515–1271 (ANGG…TVSP), 1311–1350 (LSRQPARPSYRQGYNGRPNVEGKVLPGSNGKPNGQRIING), and 1444–1515 (THPP…CPPG). Basic residues predominate over residues 565 to 574 (TLRPPSRHGH). Residues 614–625 (PSASASPAHHAS) show a composition bias toward low complexity. Residues 626–641 (TQGTSHRPSLPASLND) are compositionally biased toward polar residues. Composition is skewed to low complexity over residues 711-722 (SASAPPSRLSPP) and 759-778 (SRSTMSSSVSSHLSSRTQVS). S717 carries the phosphoserine modification. Basic and acidic residues predominate over residues 786–799 (GESHGDGDREDGGR). Composition is skewed to polar residues over residues 941–957 (KYSSLASKAQDVQQSTD) and 1027–1060 (SPSQPRLSLTQAGRPRPTSQGRSHSSSDPYTASS). The span at 1071-1088 (QDEDAQGSYDDDSTEVEA) shows a compositional bias: acidic residues. The segment covering 1166–1176 (PLSSKSQQSVS) has biased composition (polar residues). The span at 1197-1209 (SSSVPKWPSSSTP) shows a compositional bias: low complexity. The segment covering 1211-1226 (GGKDADGSLAKEEREP) has biased composition (basic and acidic residues). Low complexity predominate over residues 1445–1504 (HPPTTTMQPTTTTTPLPTTTTPRPTTATTRRTTTTRRTTTRRPTTTVRTTTRTTTTTTPT). One can recognise a Fibronectin type-III 5 domain in the interval 1658 to 1752 (APRNITVVAV…PSVSFVTESD (95 aa)). Residue N1661 is glycosylated (N-linked (GlcNAc...) asparagine).

As to expression, almost absent from healthy skin; especially in epidermal keratinocytes, skin fibroblasts or endothelial cells and is barely detectable in benign melanocytic naevi. Expressed in the stroma close to skin tumors, in the tumor cells themselves and in the epidermis of psoriasis.

The protein localises to the secreted. In terms of biological role, may be an activator of G protein signaling. This Homo sapiens (Human) protein is Fibronectin type III domain-containing protein 1 (FNDC1).